The sequence spans 103 residues: Antitoxin VapB1 (103 aa).

Functionally, antitoxin component of a type II toxin-antitoxin (TA) system. Upon expression in E.coli neutralizes the effect of cognate toxin VapC1, partially inhibits the RNase activity of VapC1 in vitro. The chain is Antitoxin VapB1 (vapB1) from Rickettsia felis (strain ATCC VR-1525 / URRWXCal2) (Rickettsia azadi).